We begin with the raw amino-acid sequence, 389 residues long: Smad nuclear interacting protein 1 (389 aa).

Residues 1 to 10 (MKAGKSERER) are compositionally biased toward basic and acidic residues. The tract at residues 1–212 (MKAGKSERER…GNKNKEVPVK (212 aa)) is disordered. Position 18 is a phosphoserine (Ser-18). Lys-28 is covalently cross-linked (Glycyl lysine isopeptide (Lys-Gly) (interchain with G-Cter in SUMO); alternate). Residue Lys-28 forms a Glycyl lysine isopeptide (Lys-Gly) (interchain with G-Cter in SUMO1); alternate linkage. Residue Lys-28 forms a Glycyl lysine isopeptide (Lys-Gly) (interchain with G-Cter in SUMO2); alternate linkage. Residues 28–43 (KQERLSPEPVAHRRPD) are compositionally biased toward basic and acidic residues. A phosphoserine mark is found at Ser-33 and Ser-48. Residues 54–72 (AESGSAGHRGSRARGASRS) show a composition bias toward low complexity. Over residues 73-95 (PAKKKSKSSGRRSKSPRTKRSRS) the composition is skewed to basic residues. Residue Ser-95 is modified to Phosphoserine. Composition is skewed to basic and acidic residues over residues 103–138 (VKQE…ERDR) and 147–163 (RSSD…DRDS). A Glycyl lysine isopeptide (Lys-Gly) (interchain with G-Cter in SUMO2) cross-link involves residue Lys-104. At Ser-149 the chain carries Phosphoserine. Residues 166-197 (LQAQEEERDFNNARRREHRQQNESAGAEAQEV) are a coiled coil. A Glycyl lysine isopeptide (Lys-Gly) (interchain with G-Cter in SUMO2) cross-link involves residue Lys-214. Positions 272–335 (YLLGRHRRIA…NGTFLNNKRI (64 aa)) constitute an FHA domain. Basic and acidic residues predominate over residues 363–373 (ESSDTSELDRK). Residues 363–389 (ESSDTSELDRKEDEDEEEEEEMVSDSS) form a disordered region. Residues 374–389 (EDEDEEEEEEMVSDSS) show a composition bias toward acidic residues. Ser-386 is modified (phosphoserine).

In terms of assembly, component of activated spliceosome complexes. Component of the minor spliceosome, which splices U12-type introns. Binds SMAD4 and CREBBP/EP300. Binds the SMAD1/OAZ1/PSMB4 complex. Interacts with DROSHA and SMARCA4. Component of the SNARP complex which consists at least of SNIP1, SNW1, THRAP3, BCLAF1 and PNN. Post-translationally, degraded by the proteasome upon binding to the SMAD1/OAZ1/PSMB4 complex.

Its subcellular location is the nucleus. Functionally, required for pre-mRNA splicing as component of the spliceosome. As a component of the minor spliceosome, involved in the splicing of U12-type introns in pre-mRNAs. Down-regulates NF-kappa-B signaling by competing with RELA for CREBBP/EP300 binding. Involved in the microRNA (miRNA) biogenesis. May be involved in cyclin-D1/CCND1 mRNA stability through the SNARP complex which associates with both the 3'end of the CCND1 gene and its mRNA. The polypeptide is Smad nuclear interacting protein 1 (Snip1) (Rattus norvegicus (Rat)).